Consider the following 314-residue polypeptide: tRNA-cytidine(32) 2-sulfurtransferase (314 aa).

Residues 49–54 (SGGKDS) carry the PP-loop motif motif. [4Fe-4S] cluster-binding residues include cysteine 124, cysteine 127, and cysteine 215.

Belongs to the TtcA family. Homodimer. It depends on Mg(2+) as a cofactor. The cofactor is [4Fe-4S] cluster.

It is found in the cytoplasm. The enzyme catalyses cytidine(32) in tRNA + S-sulfanyl-L-cysteinyl-[cysteine desulfurase] + AH2 + ATP = 2-thiocytidine(32) in tRNA + L-cysteinyl-[cysteine desulfurase] + A + AMP + diphosphate + H(+). It functions in the pathway tRNA modification. Functionally, catalyzes the ATP-dependent 2-thiolation of cytidine in position 32 of tRNA, to form 2-thiocytidine (s(2)C32). The sulfur atoms are provided by the cysteine/cysteine desulfurase (IscS) system. The chain is tRNA-cytidine(32) 2-sulfurtransferase from Histophilus somni (strain 129Pt) (Haemophilus somnus).